Reading from the N-terminus, the 453-residue chain is tRNA modification GTPase MnmE (453 aa).

Residues Arg22, Glu79, and Lys119 each coordinate (6S)-5-formyl-5,6,7,8-tetrahydrofolate. Residues 215-376 (GMKVVIAGRP…LREHLKACMG (162 aa)) form the TrmE-type G domain. Asn225 serves as a coordination point for K(+). Residues 225–230 (NAGKSS), 244–250 (TEIAGTT), 269–272 (DTAG), and 334–337 (NKAD) each bind GTP. Residue Ser229 coordinates Mg(2+). K(+) is bound by residues Thr244, Ile246, and Thr249. Thr250 lines the Mg(2+) pocket. A (6S)-5-formyl-5,6,7,8-tetrahydrofolate-binding site is contributed by Lys453.

It belongs to the TRAFAC class TrmE-Era-EngA-EngB-Septin-like GTPase superfamily. TrmE GTPase family. As to quaternary structure, homodimer. Heterotetramer of two MnmE and two MnmG subunits. It depends on K(+) as a cofactor.

Its subcellular location is the cytoplasm. In terms of biological role, exhibits a very high intrinsic GTPase hydrolysis rate. Involved in the addition of a carboxymethylaminomethyl (cmnm) group at the wobble position (U34) of certain tRNAs, forming tRNA-cmnm(5)s(2)U34. This Aeromonas hydrophila subsp. hydrophila (strain ATCC 7966 / DSM 30187 / BCRC 13018 / CCUG 14551 / JCM 1027 / KCTC 2358 / NCIMB 9240 / NCTC 8049) protein is tRNA modification GTPase MnmE.